The primary structure comprises 528 residues: MASMISAEKRNPAIVILDFGSQYSELIARRIRETEVYSLVMSYTTSADKLRSLKPKGIILSGGPGSVYEEGAPYCDPEIFNLGIPVLGVCYGMQLMVHELGGSVKPATGKAEYGKAPLEVDDPTALLTNVISGSTMWMSHGDSVQKLPKGFVRLAHTSNTLEAAIALHDKSFYGVQFHPEVVHSTHGMVVIRNFVYDICSCEPDWTTNLFIDEAVSQVQQQVGDKKVLLALSGGVDSSTLAFLLNKAIGPQLTCMFIDQGFMRKGEPEFLMSFFDEKFKINVEYINARERFISQLKGVTDPEQKRKIIGREFIRVFEEESLRLGPFDYLAQGTLYPDVIESSGTNIDPKTGERIAVKIKSHHNVGGLPKDLQFKLVEPLRRLFKDEVRKVGKSLGLPDEIVRRHPFPGPGLAIRILGEVTHEKLNCLRDADLIVREEINNAGLYNKIWQAFAVLLPVYSVGVMGDQRTYAWPIVVRCVSSEDGMTADWSRLPYAVLEKISNRIVNEVEGVNRVVLDITSKPPGTIEWE.

The Glutamine amidotransferase type-1 domain maps to 13 to 204 (AIVILDFGSQ…VYDICSCEPD (192 aa)). Cysteine 90 serves as the catalytic Nucleophile. Residues histidine 178 and glutamate 180 contribute to the active site. The GMPS ATP-PPase domain maps to 205–403 (WTTNLFIDEA…LGLPDEIVRR (199 aa)). Position 232–238 (232–238 (SGGVDSS)) interacts with ATP.

As to quaternary structure, homodimer.

The catalysed reaction is XMP + L-glutamine + ATP + H2O = GMP + L-glutamate + AMP + diphosphate + 2 H(+). It functions in the pathway purine metabolism; GMP biosynthesis; GMP from XMP (L-Gln route): step 1/1. In terms of biological role, catalyzes the synthesis of GMP from XMP. The protein is GMP synthase [glutamine-hydrolyzing] of Prochlorococcus marinus (strain NATL1A).